Reading from the N-terminus, the 256-residue chain is MNNIWWQTKGQGNVHLVLLHGWGLNAEVWRCIDEELSSHFTLHLVDLPGFGRSRGFGAMSLADMAEAVLRQAPDKAIWLGWSLGGLVASQIALTHPERVQALVTVASSPCFSARDEWPGIKPDVLAGFQQQLSDDFQRTVERFLALQTMGTETARQDARALKKTVLALPMPEVDVLNGGLEILKTVDLRQPLQNVSMPFLRLYGYLDGLVPRKVVPMLDKLWPHSESYIFAKAAHAPFISHPAEFCRMLVALKQRV.

The AB hydrolase-1 domain occupies 15-242; it reads HLVLLHGWGL…AAHAPFISHP (228 aa). Residues tryptophan 22, 82–83, and 143–147 contribute to the substrate site; these read SL and FLALQ. Serine 82 acts as the Nucleophile in catalysis. Active-site residues include aspartate 207 and histidine 235. Histidine 235 is a binding site for substrate.

Belongs to the AB hydrolase superfamily. Carboxylesterase BioH family. As to quaternary structure, monomer.

Its subcellular location is the cytoplasm. It catalyses the reaction 6-carboxyhexanoyl-[ACP] methyl ester + H2O = 6-carboxyhexanoyl-[ACP] + methanol + H(+). It participates in cofactor biosynthesis; biotin biosynthesis. Functionally, the physiological role of BioH is to remove the methyl group introduced by BioC when the pimeloyl moiety is complete. It allows to synthesize pimeloyl-ACP via the fatty acid synthetic pathway through the hydrolysis of the ester bonds of pimeloyl-ACP esters. This is Pimeloyl-[acyl-carrier protein] methyl ester esterase from Escherichia coli (strain SMS-3-5 / SECEC).